Reading from the N-terminus, the 883-residue chain is Pre-mRNA-splicing factor syf1 homolog (883 aa).

HAT repeat units follow at residues 13–45 (INFE…HKAK), 46–78 (APNN…TRRK), 88–120 (PMYE…FMTS), 122–156 (CKIT…FVRR), 158–190 (EMPE…EADR), 268–303 (GLFD…FEEL), 368–406 (DKPA…FYEA), 463–495 (KRKI…LEES), 531–565 (NYFE…KFLE), 570–604 (TKLE…LEEE), 642–676 (YGLP…LETK), and 678–712 (GEVD…FEVR). 2 disordered regions span residues 794-851 (RGET…DEEG) and 864-883 (IPAK…SDGE). Residues 812 to 834 (DEIDIGDSDEDDEEEDDDEENEM) are compositionally biased toward acidic residues. Composition is skewed to polar residues over residues 835 to 844 (TNENQASAAV) and 873 to 883 (KPSNQGDSDGE).

The protein belongs to the crooked-neck family. In terms of assembly, component of the NTC(Nineteen)/Prp19 complex composed of at least fand, Prp19,CG9667/ISY1 and Cdc5/CDC5L. Within the complex, interacts with Prp19 and ISY1/CG9667.

The protein resides in the nucleus. Functionally, subunit of the NTC(Nineteen)/Prp19 complex, which is part of the spliceosome. The complex participates in spliceosome assembly, its remodeling and is required for efficient spliceosome activation. Essential for efficient pre-mRNA splicing. In embryos, efficient pre-mRNA splicing of zygotic transcripts is essential during dynamic cellular processes that require rapid division and/or dramatic changes in gene expression such as blastoderm cellularization, tracheal branching morphogenesis, Malpighian morphogenesis and epidermal development. Part of its role in promoting embryo tracheal development is also due to specifically splicing bnl transcripts which results in the activation of the BNL-FGF pathway. This chain is Pre-mRNA-splicing factor syf1 homolog, found in Drosophila melanogaster (Fruit fly).